The following is an 898-amino-acid chain: Phosphoenolpyruvate carboxylase (898 aa).

Residues His-134 and Lys-564 contribute to the active site.

It belongs to the PEPCase type 1 family. Mg(2+) is required as a cofactor.

It catalyses the reaction oxaloacetate + phosphate = phosphoenolpyruvate + hydrogencarbonate. Forms oxaloacetate, a four-carbon dicarboxylic acid source for the tricarboxylic acid cycle. In Chromobacterium violaceum (strain ATCC 12472 / DSM 30191 / JCM 1249 / CCUG 213 / NBRC 12614 / NCIMB 9131 / NCTC 9757 / MK), this protein is Phosphoenolpyruvate carboxylase.